The primary structure comprises 62 residues: MTTVTPELLTVPEVMARLKVGRSKVYDLIRTRRLASIKIDGARRVPTDAVRDFIQDQLGEAI.

The sequence is that of Excisionase (xis) from Streptomyces ambofaciens.